The chain runs to 465 residues: Cysteine--tRNA ligase (465 aa).

Cys27 contributes to the Zn(2+) binding site. The short motif at 29 to 39 (PTVYDDAHLGH) is the 'HIGH' region element. Residues Cys207, His237, and Glu241 each contribute to the Zn(2+) site. The 'KMSKS' region motif lies at 269-273 (KMSKS). Lys272 serves as a coordination point for ATP.

Belongs to the class-I aminoacyl-tRNA synthetase family. As to quaternary structure, monomer. Zn(2+) is required as a cofactor.

It is found in the cytoplasm. It catalyses the reaction tRNA(Cys) + L-cysteine + ATP = L-cysteinyl-tRNA(Cys) + AMP + diphosphate. This chain is Cysteine--tRNA ligase, found in Helicobacter pylori (strain G27).